We begin with the raw amino-acid sequence, 523 residues long: 2-isopropylmalate synthase (523 aa).

Residues 5–267 (VIIFDTTLRD…HTNINHHEIW (263 aa)) enclose the Pyruvate carboxyltransferase domain. Mn(2+) is bound by residues Asp14, His202, His204, and Asn238. The regulatory domain stretch occupies residues 392–523 (RLDYFSVQSG…QNKENNKETV (132 aa)).

Belongs to the alpha-IPM synthase/homocitrate synthase family. LeuA type 1 subfamily. As to quaternary structure, homodimer. Mn(2+) is required as a cofactor.

The protein resides in the cytoplasm. It carries out the reaction 3-methyl-2-oxobutanoate + acetyl-CoA + H2O = (2S)-2-isopropylmalate + CoA + H(+). It functions in the pathway amino-acid biosynthesis; L-leucine biosynthesis; L-leucine from 3-methyl-2-oxobutanoate: step 1/4. Catalyzes the condensation of the acetyl group of acetyl-CoA with 3-methyl-2-oxobutanoate (2-ketoisovalerate) to form 3-carboxy-3-hydroxy-4-methylpentanoate (2-isopropylmalate). The polypeptide is 2-isopropylmalate synthase (Klebsiella pneumoniae (strain 342)).